The sequence spans 152 residues: Lipoprotein signal peptidase (152 aa).

Transmembrane regions (helical) follow at residues 55 to 75 (NKMW…VFYM) and 85 to 105 (LGIS…DRVF). Active-site residues include D111 and D129. Residues 124–144 (VFNIADSALCIGVVLIIIQTL) form a helical membrane-spanning segment.

This sequence belongs to the peptidase A8 family.

It localises to the cell membrane. It catalyses the reaction Release of signal peptides from bacterial membrane prolipoproteins. Hydrolyzes -Xaa-Yaa-Zaa-|-(S,diacylglyceryl)Cys-, in which Xaa is hydrophobic (preferably Leu), and Yaa (Ala or Ser) and Zaa (Gly or Ala) have small, neutral side chains.. It participates in protein modification; lipoprotein biosynthesis (signal peptide cleavage). Its function is as follows. This protein specifically catalyzes the removal of signal peptides from prolipoproteins. The sequence is that of Lipoprotein signal peptidase from Bacillus cereus (strain AH187).